A 423-amino-acid polypeptide reads, in one-letter code: UDP-N-acetylglucosamine 1-carboxyvinyltransferase (423 aa).

K22 to N23 contacts phosphoenolpyruvate. Residue R93 coordinates UDP-N-acetyl-alpha-D-glucosamine. Residue C117 is the Proton donor of the active site. Residue C117 is modified to 2-(S-cysteinyl)pyruvic acid O-phosphothioketal. Residues R122 to L126, D308, and V330 contribute to the UDP-N-acetyl-alpha-D-glucosamine site.

Belongs to the EPSP synthase family. MurA subfamily.

The protein localises to the cytoplasm. It carries out the reaction phosphoenolpyruvate + UDP-N-acetyl-alpha-D-glucosamine = UDP-N-acetyl-3-O-(1-carboxyvinyl)-alpha-D-glucosamine + phosphate. It functions in the pathway cell wall biogenesis; peptidoglycan biosynthesis. Functionally, cell wall formation. Adds enolpyruvyl to UDP-N-acetylglucosamine. In Finegoldia magna (strain ATCC 29328 / DSM 20472 / WAL 2508) (Peptostreptococcus magnus), this protein is UDP-N-acetylglucosamine 1-carboxyvinyltransferase.